The primary structure comprises 226 residues: Probable transcriptional regulatory protein y4xI (226 aa).

The Response regulatory domain occupies 1 to 114; it reads MRTLLVDTDL…ELIARMRALL (114 aa). A DNA-binding region (ompR/PhoB-type) is located at residues 122 to 220; it reads CPIIEFGNLH…VRGIGYTLEL (99 aa).

It localises to the cytoplasm. This Sinorhizobium fredii (strain NBRC 101917 / NGR234) protein is Probable transcriptional regulatory protein y4xI.